The sequence spans 251 residues: Hydroxyacylglutathione hydrolase (251 aa).

Positions 53, 55, 57, 58, 110, 127, and 165 each coordinate Zn(2+).

Belongs to the metallo-beta-lactamase superfamily. Glyoxalase II family. As to quaternary structure, monomer. Requires Zn(2+) as cofactor.

It catalyses the reaction an S-(2-hydroxyacyl)glutathione + H2O = a 2-hydroxy carboxylate + glutathione + H(+). The protein operates within secondary metabolite metabolism; methylglyoxal degradation; (R)-lactate from methylglyoxal: step 2/2. Thiolesterase that catalyzes the hydrolysis of S-D-lactoyl-glutathione to form glutathione and D-lactic acid. In Escherichia coli (strain 55989 / EAEC), this protein is Hydroxyacylglutathione hydrolase.